The sequence spans 215 residues: Octanoyltransferase (215 aa).

One can recognise a BPL/LPL catalytic domain in the interval 31 to 206 (PDSQDEIWLV…QLVKHLDYAE (176 aa)). Substrate-binding positions include 70–77 (RGGQVTYH), 137–139 (SLG), and 150–152 (GLA). Cysteine 168 functions as the Acyl-thioester intermediate in the catalytic mechanism.

Belongs to the LipB family.

It is found in the cytoplasm. The catalysed reaction is octanoyl-[ACP] + L-lysyl-[protein] = N(6)-octanoyl-L-lysyl-[protein] + holo-[ACP] + H(+). The protein operates within protein modification; protein lipoylation via endogenous pathway; protein N(6)-(lipoyl)lysine from octanoyl-[acyl-carrier-protein]: step 1/2. In terms of biological role, catalyzes the transfer of endogenously produced octanoic acid from octanoyl-acyl-carrier-protein onto the lipoyl domains of lipoate-dependent enzymes. Lipoyl-ACP can also act as a substrate although octanoyl-ACP is likely to be the physiological substrate. This is Octanoyltransferase from Pseudomonas putida (strain ATCC 700007 / DSM 6899 / JCM 31910 / BCRC 17059 / LMG 24140 / F1).